The chain runs to 241 residues: Mitochondrial inner membrane protease ATP23 (241 aa).

H141 contacts a divalent metal cation. E142 is a catalytic residue. H145 lines the a divalent metal cation pocket.

Belongs to the peptidase M76 family.

The protein resides in the mitochondrion inner membrane. Functionally, has a dual role in the assembly of mitochondrial ATPase. Acts as a protease that removes N-terminal residues of mitochondrial ATPase CF(0) subunit 6 at the intermembrane space side. Also involved in the correct assembly of the membrane-embedded ATPase CF(0) particle, probably mediating association of subunit 6 with the subunit 9 ring. In Lodderomyces elongisporus (strain ATCC 11503 / CBS 2605 / JCM 1781 / NBRC 1676 / NRRL YB-4239) (Yeast), this protein is Mitochondrial inner membrane protease ATP23 (ATP23).